The primary structure comprises 320 residues: Transcription factor bHLH96 (320 aa).

Positions 30–121 (EEEDQDPQDT…RSSKNKEEIE (92 aa)) are disordered. Residues 65–76 (YSDDYNYNEEDL) are compositionally biased toward acidic residues. A compositionally biased stretch (basic residues) spans 104–114 (GRRKRRRTRSS). A bHLH domain is found at 122-173 (NQRMTHIAVERNRRKQMNEYLAVLRSLMPPYYAQRGDQASIVGGAINYLKEL). Residues 184–206 (VKTATEDTGAGHDQTKTTSASSS) form a disordered region. In terms of domain architecture, ACT spans 244–320 (SLKILAKKRP…RRIEEESSFS (77 aa)).

Homodimer. As to expression, expressed constitutively in roots, leaves, stems, and flowers.

It is found in the nucleus. This chain is Transcription factor bHLH96 (BHLH96), found in Arabidopsis thaliana (Mouse-ear cress).